Reading from the N-terminus, the 242-residue chain is MEFDPTKINTSSIDHVTILQYIDEPNDIRLTVCIIRNINNITYYINITKINPHLANQFRAWKKRIAGRDYMTNLSRDTGIQQSKLTETIRNCQKNRNIYGLYIHYNLVINVVIDWITDVIVQSILRGLVNWYIANNTYTPNTPNNTTTISELDIIKILDKYEDVYRVSKEKECGICYEVVYSKRLENDRYFGLLDSCNHIFCITCINIWHRTRRETGASDNCPICRTRFRNITMSKFYKLVN.

Residues 21-131 form the KilA-N domain; it reads YIDEPNDIRL…QSILRGLVNW (111 aa). The segment at 173-226 adopts an RING-type zinc-finger fold; it reads CGICYEVVYSKRLENDRYFGLLDSCNHIFCITCINIWHRTRRETGASDNCPICR.

It belongs to the orthopoxvirus OPG021 family.

Its subcellular location is the host cytoplasm. It catalyses the reaction S-ubiquitinyl-[E2 ubiquitin-conjugating enzyme]-L-cysteine + [acceptor protein]-L-lysine = [E2 ubiquitin-conjugating enzyme]-L-cysteine + N(6)-ubiquitinyl-[acceptor protein]-L-lysine.. RING-finger E3 ubiquitin ligase which catalyzes the formation of both 'Lys-48'- and 'Lys-63'-linked polyubiquitin chains. Plays an important role in virulence by acting as an anti-apoptotic factor. The sequence is that of Host range factor p28 (OPG021) from Bos taurus (Bovine).